We begin with the raw amino-acid sequence, 445 residues long: 23S rRNA (uracil(1939)-C(5))-methyltransferase RlmD (445 aa).

One can recognise a TRAM domain in the interval 6–64 (RRLPREPFEIAITGLSHEGRGIAHHDERTLFVHGALPGERVRAVYTKRRRSVAEARVVE). Residues C77, C83, C86, and C165 each coordinate [4Fe-4S] cluster. S-adenosyl-L-methionine is bound by residues Q274, F303, N308, E324, D351, and D372. Residue C398 is the Nucleophile of the active site.

Belongs to the class I-like SAM-binding methyltransferase superfamily. RNA M5U methyltransferase family. RlmD subfamily.

The catalysed reaction is uridine(1939) in 23S rRNA + S-adenosyl-L-methionine = 5-methyluridine(1939) in 23S rRNA + S-adenosyl-L-homocysteine + H(+). In terms of biological role, catalyzes the formation of 5-methyl-uridine at position 1939 (m5U1939) in 23S rRNA. This chain is 23S rRNA (uracil(1939)-C(5))-methyltransferase RlmD, found in Alkalilimnicola ehrlichii (strain ATCC BAA-1101 / DSM 17681 / MLHE-1).